The sequence spans 323 residues: MLIDGFGRKVDYLRVSVTERCNFRCQYCMPEKPFSWVPRENLLSYEDLFKFIKASIDEGIKKVRITGGEPLLREDLDFFIKMVFDYKKDIDLALTTNGYLLSKMAKKLKDAGLKRVNISLDTLNKETAQKIAQKDVLEKVLEGIEEASKVGLKIKINCVPLKGVSEKDVLEVLEFCKSRGFVVRFIEFMENFHAKDGAKGLNSDEIKAIIAQKYPNFKTVLRDTSSPAQYYELEDGYQFGIIEPHKDDFCASCNRIRLTAEGFLIPCLYFEDAMSIKNAVQSNKIDEAVEILKKVLKNKPEKNKWSQKDDNEVSTRAFYQTGG.

The Radical SAM core domain occupies 5–228 (GFGRKVDYLR…TVLRDTSSPA (224 aa)). Arginine 14 is a GTP binding site. Positions 21 and 25 each coordinate [4Fe-4S] cluster. Tyrosine 27 serves as a coordination point for S-adenosyl-L-methionine. Position 28 (cysteine 28) interacts with [4Fe-4S] cluster. Residue arginine 64 coordinates GTP. Glycine 68 provides a ligand contact to S-adenosyl-L-methionine. Threonine 95 serves as a coordination point for GTP. Residue serine 119 participates in S-adenosyl-L-methionine binding. Position 155 (lysine 155) interacts with GTP. Residue methionine 189 coordinates S-adenosyl-L-methionine. 2 residues coordinate [4Fe-4S] cluster: cysteine 250 and cysteine 253. 255-257 (RIR) contributes to the GTP binding site. A [4Fe-4S] cluster-binding site is contributed by cysteine 267. Positions 302-313 (KNKWSQKDDNEV) are enriched in basic and acidic residues. Positions 302-323 (KNKWSQKDDNEVSTRAFYQTGG) are disordered.

This sequence belongs to the radical SAM superfamily. MoaA family. In terms of assembly, monomer and homodimer. It depends on [4Fe-4S] cluster as a cofactor.

It catalyses the reaction GTP + AH2 + S-adenosyl-L-methionine = (8S)-3',8-cyclo-7,8-dihydroguanosine 5'-triphosphate + 5'-deoxyadenosine + L-methionine + A + H(+). Its pathway is cofactor biosynthesis; molybdopterin biosynthesis. In terms of biological role, catalyzes the cyclization of GTP to (8S)-3',8-cyclo-7,8-dihydroguanosine 5'-triphosphate. The chain is GTP 3',8-cyclase from Aliarcobacter butzleri (strain RM4018) (Arcobacter butzleri).